Here is a 281-residue protein sequence, read N- to C-terminus: Ornithine lipid ester-linked acyl 2-hydroxylase (281 aa).

Residues 1 to 24 (MTESPLSAPAPTSNQSPAPEQTFG) are compositionally biased toward polar residues. Residues 1–29 (MTESPLSAPAPTSNQSPAPEQTFGTAGIA) form a disordered region.

It belongs to the aspartyl/asparaginyl beta-hydroxylase family.

The catalysed reaction is an N(2)-[(3R)-3-(2-saturated-acyloxy)acyl]-L-ornithine lipid + 2-oxoglutarate + O2 = a 2-hydroxyornithine lipid + succinate + CO2. The protein operates within lipid metabolism. Its function is as follows. Involved in the biosynthesis of ornithine lipids (OLs), which are phosphorus-free membrane lipids. Catalyzes the hydroxylation at the 2 position of the secondary fatty acid of OL. Contributes to symbiotic performance and acid tolerance. This chain is Ornithine lipid ester-linked acyl 2-hydroxylase, found in Rhizobium tropici.